The sequence spans 150 residues: 16.9 kDa class I heat shock protein 1 (150 aa).

An important for thermostability under elevated temperature region spans residues 1-42; sequence MSLVRRSNVFDPFSLDLWDPFDSVFRSVVPATSDNDTAAFAN. A sHSP domain is found at 36–150; sequence DTAAFANARI…PEVKAIEISG (115 aa).

It belongs to the small heat shock protein (HSP20) family. As to quaternary structure, forms oligomeric structures.

The protein localises to the cytoplasm. The chain is 16.9 kDa class I heat shock protein 1 (HSP16.9A) from Oryza sativa subsp. japonica (Rice).